We begin with the raw amino-acid sequence, 689 residues long: Transketolase (689 aa).

Residue His-56 coordinates substrate. Thiamine diphosphate is bound by residues His-96 and 144-146; that span reads GNL. Position 185 (Asp-185) interacts with Mg(2+). Thiamine diphosphate is bound by residues Gly-186 and Asn-215. Mg(2+) contacts are provided by Asn-215 and Ile-217. Residues His-289, Arg-380, and Ser-407 each contribute to the substrate site. His-289 contacts thiamine diphosphate. Catalysis depends on Glu-434, which acts as the Proton donor. Phe-460 contributes to the thiamine diphosphate binding site. Substrate is bound by residues His-484, Asp-492, and Arg-543.

It belongs to the transketolase family. Homodimer. It depends on Mg(2+) as a cofactor. Ca(2+) serves as cofactor. Mn(2+) is required as a cofactor. Requires Co(2+) as cofactor. The cofactor is thiamine diphosphate.

The catalysed reaction is D-sedoheptulose 7-phosphate + D-glyceraldehyde 3-phosphate = aldehydo-D-ribose 5-phosphate + D-xylulose 5-phosphate. Its function is as follows. Catalyzes the transfer of a two-carbon ketol group from a ketose donor to an aldose acceptor, via a covalent intermediate with the cofactor thiamine pyrophosphate. This is Transketolase (tkt) from Aquifex aeolicus (strain VF5).